A 517-amino-acid polypeptide reads, in one-letter code: T-complex protein 11-like protein 2 (517 aa).

The interval M1–G59 is disordered. Position 16 is a phosphoserine (S16). Low complexity predominate over residues S36–S55.

Belongs to the TCP11 family. As to quaternary structure, interacts with FMNL2; this interaction promotes muscle-derived satellite cell (MDSC) migration and differentiation.

It is found in the cytoplasm. The protein localises to the cytoskeleton. Promotes the migration of muscle-derived satellite cells (MDSCs) during differentiation throught interaction with FMNL2 and therefore may participate in microfilament assembly. This Mus musculus (Mouse) protein is T-complex protein 11-like protein 2.